The sequence spans 342 residues: Large ribosomal subunit protein uL10 (342 aa).

The interval 212 to 342 is required for interaction with ribosomal protein L12 dimers; sequence EYIDMLQKAY…ALAGLSALFG (131 aa). A compositionally biased stretch (polar residues) spans 299–308; that stretch reads QAQVAVATQP. The segment at 299 to 342 is disordered; it reads QAQVAVATQPSEEEKKEEEKTEEEEKEEEASEEEALAGLSALFG. Acidic residues predominate over residues 318 to 333; sequence KTEEEEKEEEASEEEA.

This sequence belongs to the universal ribosomal protein uL10 family. As to quaternary structure, part of the 50S ribosomal subunit, binds large rRNA. Forms the ribosomal stalk which helps the ribosome interact with GTP-bound translation factors. Forms a heptameric L10(L12)2(L12)2(L12)2 complex, where L10 forms an elongated spine to which the L12 dimers bind in a sequential fashion.

Its function is as follows. Forms the large subunit's ribosomal stalk, playing a central role in the interaction of the ribosome with elongation factors; the stalk complex of P.horikoshii binds to E.coli large subunits and confers on them the ability to interact with eukaryotic elongation factors. Each succesive L12 dimer bound along the P0 spine increases the GTPase activity of elongation factors and increases translation by reconsituted ribosomes, although the first site is the most stimulatory. This is Large ribosomal subunit protein uL10 from Pyrococcus horikoshii (strain ATCC 700860 / DSM 12428 / JCM 9974 / NBRC 100139 / OT-3).